Reading from the N-terminus, the 83-residue chain is Large ribosomal subunit protein bL27c (83 aa).

Positions Met-1–Lys-24 are disordered.

It belongs to the bacterial ribosomal protein bL27 family.

The protein resides in the plastid. The protein localises to the chloroplast. The chain is Large ribosomal subunit protein bL27c (rpl27) from Trieres chinensis (Marine centric diatom).